Here is a 264-residue protein sequence, read N- to C-terminus: S-adenosylmethionine decarboxylase proenzyme (264 aa).

The active-site Schiff-base intermediate with substrate; via pyruvic acid is Ser-113. Position 113 is a pyruvic acid (Ser); by autocatalysis (Ser-113). Catalysis depends on His-118, which acts as the Proton acceptor; for processing activity. The active-site Proton donor; for catalytic activity is the Cys-141.

It belongs to the prokaryotic AdoMetDC family. Type 2 subfamily. As to quaternary structure, heterooctamer of four alpha and four beta chains arranged as a tetramer of alpha/beta heterodimers. Pyruvate serves as cofactor. Post-translationally, is synthesized initially as an inactive proenzyme. Formation of the active enzyme involves a self-maturation process in which the active site pyruvoyl group is generated from an internal serine residue via an autocatalytic post-translational modification. Two non-identical subunits are generated from the proenzyme in this reaction, and the pyruvate is formed at the N-terminus of the alpha chain, which is derived from the carboxyl end of the proenzyme. The post-translation cleavage follows an unusual pathway, termed non-hydrolytic serinolysis, in which the side chain hydroxyl group of the serine supplies its oxygen atom to form the C-terminus of the beta chain, while the remainder of the serine residue undergoes an oxidative deamination to produce ammonia and the pyruvoyl group blocking the N-terminus of the alpha chain.

It carries out the reaction S-adenosyl-L-methionine + H(+) = S-adenosyl 3-(methylsulfanyl)propylamine + CO2. It functions in the pathway amine and polyamine biosynthesis; S-adenosylmethioninamine biosynthesis; S-adenosylmethioninamine from S-adenosyl-L-methionine: step 1/1. In terms of biological role, catalyzes the decarboxylation of S-adenosylmethionine to S-adenosylmethioninamine (dcAdoMet), the propylamine donor required for the synthesis of the polyamines spermine and spermidine from the diamine putrescine. The sequence is that of S-adenosylmethionine decarboxylase proenzyme from Azotobacter vinelandii (strain DJ / ATCC BAA-1303).